Here is a 283-residue protein sequence, read N- to C-terminus: Bis(5'-nucleosyl)-tetraphosphatase, symmetrical (283 aa).

Belongs to the Ap4A hydrolase family.

The enzyme catalyses P(1),P(4)-bis(5'-adenosyl) tetraphosphate + H2O = 2 ADP + 2 H(+). Hydrolyzes diadenosine 5',5'''-P1,P4-tetraphosphate to yield ADP. The polypeptide is Bis(5'-nucleosyl)-tetraphosphatase, symmetrical (Serratia proteamaculans (strain 568)).